Here is a 426-residue protein sequence, read N- to C-terminus: 3-phosphoshikimate 1-carboxyvinyltransferase (426 aa).

3-phosphoshikimate is bound by residues Lys-22, Ser-23, and Arg-27. Lys-22 contacts phosphoenolpyruvate. Phosphoenolpyruvate contacts are provided by Gly-96 and Arg-124. Positions 170, 171, 172, 198, 314, 337, and 341 each coordinate 3-phosphoshikimate. Phosphoenolpyruvate is bound at residue Gln-172. Asp-314 acts as the Proton acceptor in catalysis. Residues Arg-345, Arg-387, and Lys-412 each contribute to the phosphoenolpyruvate site.

The protein belongs to the EPSP synthase family. Monomer.

Its subcellular location is the cytoplasm. The catalysed reaction is 3-phosphoshikimate + phosphoenolpyruvate = 5-O-(1-carboxyvinyl)-3-phosphoshikimate + phosphate. It participates in metabolic intermediate biosynthesis; chorismate biosynthesis; chorismate from D-erythrose 4-phosphate and phosphoenolpyruvate: step 6/7. Its function is as follows. Catalyzes the transfer of the enolpyruvyl moiety of phosphoenolpyruvate (PEP) to the 5-hydroxyl of shikimate-3-phosphate (S3P) to produce enolpyruvyl shikimate-3-phosphate and inorganic phosphate. The polypeptide is 3-phosphoshikimate 1-carboxyvinyltransferase (Shewanella sediminis (strain HAW-EB3)).